An 882-amino-acid polypeptide reads, in one-letter code: Putative HTH-type transcriptional regulator Mb0914c (882 aa).

An HTH luxR-type domain is found at 814-879 (PARGWGSLTP…QLVDEAARRG (66 aa)). A DNA-binding region (H-T-H motif) is located at residues 838–857 (NKDIAKRLFVSPRTVQTHLT).

This chain is Putative HTH-type transcriptional regulator Mb0914c, found in Mycobacterium bovis (strain ATCC BAA-935 / AF2122/97).